The primary structure comprises 428 residues: Cytochrome c biogenesis protein CcsB (428 aa).

3 consecutive transmembrane segments (helical) span residues 14-34 (LRFA…GTFI), 72-92 (SNWF…CSFR), and 162-182 (LGPI…AYGN).

This sequence belongs to the Ccs1/CcsB family. In terms of assembly, may interact with CcsA.

The protein resides in the cellular thylakoid membrane. Its function is as follows. Required during biogenesis of c-type cytochromes (cytochrome c6 and cytochrome f) at the step of heme attachment. This chain is Cytochrome c biogenesis protein CcsB, found in Prochlorococcus marinus subsp. pastoris (strain CCMP1986 / NIES-2087 / MED4).